We begin with the raw amino-acid sequence, 402 residues long: NADH-quinone oxidoreductase subunit D (402 aa).

It belongs to the complex I 49 kDa subunit family. In terms of assembly, NDH-1 is composed of 14 different subunits. Subunits NuoB, C, D, E, F, and G constitute the peripheral sector of the complex.

The protein resides in the cell inner membrane. It carries out the reaction a quinone + NADH + 5 H(+)(in) = a quinol + NAD(+) + 4 H(+)(out). Its function is as follows. NDH-1 shuttles electrons from NADH, via FMN and iron-sulfur (Fe-S) centers, to quinones in the respiratory chain. The immediate electron acceptor for the enzyme in this species is believed to be ubiquinone. Couples the redox reaction to proton translocation (for every two electrons transferred, four hydrogen ions are translocated across the cytoplasmic membrane), and thus conserves the redox energy in a proton gradient. The chain is NADH-quinone oxidoreductase subunit D from Cereibacter sphaeroides (strain ATCC 17025 / ATH 2.4.3) (Rhodobacter sphaeroides).